Consider the following 471-residue polypeptide: ATP synthase subunit beta 2 (471 aa).

157–164 is an ATP binding site; that stretch reads GGAGVGKT.

It belongs to the ATPase alpha/beta chains family. F-type ATPases have 2 components, CF(1) - the catalytic core - and CF(0) - the membrane proton channel. CF(1) has five subunits: alpha(3), beta(3), gamma(1), delta(1), epsilon(1). CF(0) has three main subunits: a(1), b(2) and c(9-12). The alpha and beta chains form an alternating ring which encloses part of the gamma chain. CF(1) is attached to CF(0) by a central stalk formed by the gamma and epsilon chains, while a peripheral stalk is formed by the delta and b chains.

It is found in the cell inner membrane. It carries out the reaction ATP + H2O + 4 H(+)(in) = ADP + phosphate + 5 H(+)(out). Its function is as follows. Produces ATP from ADP in the presence of a proton gradient across the membrane. The catalytic sites are hosted primarily by the beta subunits. The protein is ATP synthase subunit beta 2 of Pelobacter propionicus (strain DSM 2379 / NBRC 103807 / OttBd1).